A 193-amino-acid chain; its full sequence is ATP-dependent protease subunit HslV (193 aa).

The active site involves Thr12. Ala167, Cys170, and Thr173 together coordinate Na(+).

Belongs to the peptidase T1B family. HslV subfamily. In terms of assembly, a double ring-shaped homohexamer of HslV is capped on each side by a ring-shaped HslU homohexamer. The assembly of the HslU/HslV complex is dependent on binding of ATP.

The protein resides in the cytoplasm. It catalyses the reaction ATP-dependent cleavage of peptide bonds with broad specificity.. Its activity is regulated as follows. Allosterically activated by HslU binding. Protease subunit of a proteasome-like degradation complex believed to be a general protein degrading machinery. The chain is ATP-dependent protease subunit HslV from Bartonella henselae (strain ATCC 49882 / DSM 28221 / CCUG 30454 / Houston 1) (Rochalimaea henselae).